The primary structure comprises 134 residues: Early E3B 14.9 kDa protein (134 aa).

An N-terminal signal peptide occupies residues 1–19 (MQAMLPVILILLLPCIALA). Residues 54-78 (YWIVIVGIINILSCTFFSITIYPTF) form a helical membrane-spanning segment.

This sequence belongs to the adenoviridae E3_14 family. Post-translationally, phosphorylated on serine; O-glycosylated, but not N-glycosylated.

The protein resides in the host membrane. Down-regulates the EGF receptor and prevents cytolysis by TNF. In Homo sapiens (Human), this protein is Early E3B 14.9 kDa protein.